The chain runs to 197 residues: Potassium-transporting ATPase KdpC subunit (197 aa).

Residues 7–27 (PALVSMGLFTVLLGLAYPLAV) traverse the membrane as a helical segment.

Belongs to the KdpC family. In terms of assembly, the system is composed of three essential subunits: KdpA, KdpB and KdpC.

The protein resides in the cell inner membrane. In terms of biological role, part of the high-affinity ATP-driven potassium transport (or Kdp) system, which catalyzes the hydrolysis of ATP coupled with the electrogenic transport of potassium into the cytoplasm. This subunit acts as a catalytic chaperone that increases the ATP-binding affinity of the ATP-hydrolyzing subunit KdpB by the formation of a transient KdpB/KdpC/ATP ternary complex. This chain is Potassium-transporting ATPase KdpC subunit, found in Caulobacter vibrioides (strain ATCC 19089 / CIP 103742 / CB 15) (Caulobacter crescentus).